A 1059-amino-acid chain; its full sequence is Dihydropyrimidine dehydrogenase [NADP(+)] (1059 aa).

In terms of domain architecture, 4Fe-4S ferredoxin-type 1 spans 84-118 (ERGALKEAMRCLKCADAPCQKSCPTQLDVKSFITS). Positions 94, 97, 102, 106, 145, 151, 155, and 171 each coordinate [4Fe-4S] cluster. FAD-binding positions include 207–211 (GCGPA), 231–239 (EKRAYIGGL), arginine 248, and leucine 274. NADP(+) is bound by residues 354–357 (AGDT), 378–379 (RK), arginine 385, 451–453 (AFG), and 495–501 (DVAGVAE). 494–503 (GDVAGVAETT) is an FAD binding site. FMN is bound by residues serine 564 and 588-589 (KT). Substrate is bound by residues asparagine 623 and 682-684 (NLS). The active-site Proton acceptor is the cysteine 685. Lysine 723 lines the FMN pocket. 750–751 (NT) contacts substrate. FMN contacts are provided by residues glycine 781, 807–809 (TGG), and 830–831 (CS). 2 consecutive 4Fe-4S ferredoxin-type domains span residues 955-987 (KVAI…FDPV) and 989-1019 (HQPH…MVPR). Cysteine 964, cysteine 967, cysteine 970, cysteine 974, cysteine 998, cysteine 1001, cysteine 1004, and cysteine 1008 together coordinate [4Fe-4S] cluster.

Belongs to the dihydropyrimidine dehydrogenase family. Requires [4Fe-4S] cluster as cofactor. FAD is required as a cofactor. FMN serves as cofactor.

It carries out the reaction 5,6-dihydrouracil + NADP(+) = uracil + NADPH + H(+). Its pathway is amino-acid biosynthesis; beta-alanine biosynthesis. In terms of biological role, involved in pyrimidine base degradation. Catalyzes the reduction of uracil and thymine. Involved in the degradation of the chemotherapeutic drug 5-fluorouracil. In Caenorhabditis elegans, this protein is Dihydropyrimidine dehydrogenase [NADP(+)] (dpyd-1).